The chain runs to 97 residues: Zinc metalloproteinase-disintegrin-like bothrojarin-4 (97 aa).

The Disintegrin domain maps to 4–90; that stretch reads PPVCGNYFVE…DCPTDRFRRN (87 aa). Residues valine 6, asparagine 9, phenylalanine 11, glutamate 13, glutamate 16, and aspartate 19 each contribute to the Ca(2+) site. Intrachain disulfides connect cysteine 7-cysteine 36, cysteine 18-cysteine 31, cysteine 20-cysteine 26, cysteine 30-cysteine 53, cysteine 44-cysteine 50, cysteine 49-cysteine 75, and cysteine 62-cysteine 82. An N-linked (GlcNAc...) asparagine glycan is attached at asparagine 32. The D/ECD-tripeptide; atypical (KCD) motif lies at 68 to 70; it reads KCD.

It belongs to the venom metalloproteinase (M12B) family. P-III subfamily. P-IIIa sub-subfamily. Monomer. The cofactor is Zn(2+). In terms of tissue distribution, expressed by the venom gland.

It is found in the secreted. The hemorrhagic metalloproteinase-disintegrin-like bothrojarin-1 is a potent inhibitor of collagen-induced platelet aggregation by blockage of alpha-2/beta-1 (ITGA2/ITGB1) integrin. It does not present any fibrinogen-clotting activity. The sequence is that of Zinc metalloproteinase-disintegrin-like bothrojarin-4 from Bothrops jararaca (Jararaca).